We begin with the raw amino-acid sequence, 260 residues long: Small ribosomal subunit protein uS2 (260 aa).

Residues 228–240 show a composition bias toward basic and acidic residues; the sequence is RKETKAENAEEAM. Residues 228–260 form a disordered region; that stretch reads RKETKAENAEEAMKQAAEAEAEAAAPAAEESAE. Low complexity predominate over residues 241-260; it reads KQAAEAEAEAAAPAAEESAE.

The protein belongs to the universal ribosomal protein uS2 family.

This Oleidesulfovibrio alaskensis (strain ATCC BAA-1058 / DSM 17464 / G20) (Desulfovibrio alaskensis) protein is Small ribosomal subunit protein uS2.